The following is a 97-amino-acid chain: Coiled-coil domain-containing protein 167 (97 aa).

A coiled-coil region spans residues 2-78 (TKKKRENLGV…LLRHENRKNT (77 aa)). Residues 78-95 (TLLSVAIFTVFALLYAYW) traverse the membrane as a helical segment.

It is found in the membrane. This is Coiled-coil domain-containing protein 167 (Ccdc167) from Mus musculus (Mouse).